The following is a 663-amino-acid chain: MSDLFSFNNKEKKNKIIYTNYSAKDIEVLDGLEPVRKRPGMYIGGTDSNAMHHLVSEVLDNAMDEAVAGFASIIMIKMHQDHSITIFDNGRGIPIDNHPKFPNKSALEVILTTLHSGSKFSNNVYHTAGGLHGVGISVVNALSKHLKIEVYQQGKLYSQSYSKGEKLTDLISTEVSKRLRGTSINFTPDPEIFSETLHFNPKKIYEIARSKAYLYRGVSIEWECEVEVPSDIPKKALINFPNGLKDYLSSKISLDNLVIPEIFSGNIESTMDAIKLEWAICWQNNDTSAFMKSYCNTVPTPQGGTHEQGLKSAILRGLKAYSEMIGNKKSANLTIEDIFETASVVLSVFIVEPSFQGQTKEKLVSNGVSKLVENIIKDHFDHFLSSDKVLATHLLEHVIAISEFRRNKKNERNISRKNATQKLRLPGKLADCTRTSAEGTELFIVEGDSAGGSAKQARNRETQAVLPLWGKVLNVASSTLEKIINNQAIQDLEIALACGSLKNYKKENLRYEKIIIMTDADVDGAHIASLLMTFFFLRMPQLVKEGHLYLAKPPLYRLTQSNKIYYACDEEEKIKLTYKLSKTSKAKIEVGRFKGLGEMMPAQLKETTMHPEKRSLLKVTLEDVQNVDKIVDDLMGKKPEKRFQFIYEQALVKMDQIINKLDI.

ATP contacts are provided by residues Tyr-21, Asn-61, Asp-88, 130-136 (GLHGVGI), and Lys-360. In terms of domain architecture, Toprim spans 440–554 (TELFIVEGDS…EGHLYLAKPP (115 aa)). Residues Glu-446, Asp-519, and Asp-521 each contribute to the Mg(2+) site.

Belongs to the type II topoisomerase family. ParE type 1 subfamily. Heterotetramer composed of ParC and ParE. Mg(2+) serves as cofactor. The cofactor is Mn(2+). Requires Ca(2+) as cofactor.

The catalysed reaction is ATP-dependent breakage, passage and rejoining of double-stranded DNA.. Its function is as follows. Topoisomerase IV is essential for chromosome segregation. It relaxes supercoiled DNA. Performs the decatenation events required during the replication of a circular DNA molecule. This Rickettsia typhi (strain ATCC VR-144 / Wilmington) protein is DNA topoisomerase 4 subunit B.